Reading from the N-terminus, the 94-residue chain is RNA-binding protein Hfq (94 aa).

A Sm domain is found at 9 to 68 (DPFLNALRRERVPVSIYLVNGIKLQGQVESFDQFVILLKNTVSQMVYKHAISTVVPARPF). The disordered stretch occupies residues 70-94 (VSAHHSSPAPTPAGGFNGQNDETSE).

The protein belongs to the Hfq family. As to quaternary structure, homohexamer.

RNA chaperone that binds small regulatory RNA (sRNAs) and mRNAs to facilitate mRNA translational regulation in response to envelope stress, environmental stress and changes in metabolite concentrations. Also binds with high specificity to tRNAs. This is RNA-binding protein Hfq from Shewanella woodyi (strain ATCC 51908 / MS32).